The chain runs to 57 residues: Small hydrophobic protein (57 aa).

The Virion surface portion of the chain corresponds to 1–8 (MPAIQPPL). Residues 9–29 (YLTFLLLILLYLIITLYVWTI) traverse the membrane as a helical segment. The Intravirion portion of the chain corresponds to 30 to 57 (LTINHKTAVRYAALYQRSCSRWGFDQSL).

This sequence belongs to the rubulavirus small hydrophobic protein family. Interacts with host TNFRSF1A, RIPK1 and IRAK1; these interactions interfere with host NF-kappa-B activation at the level of receptor complexes. Interacts with host protein UBQLN4.

It is found in the virion membrane. The protein resides in the host cell membrane. Functionally, plays a role in the inhibition of the host NF-kappa-B pathway. This inhibition occurs at the receptor level, by preventing the signaling of TNFR1 as well as IL-1R and TLR3. This is Small hydrophobic protein (SH) from Mumps virus (strain Enders) (MuV).